The primary structure comprises 350 residues: Probable deoxyhypusine synthase (350 aa).

Residues 96–100 (SNLIS), 122–124 (TAG), E128, and D229 contribute to the NAD(+) site. Residue 127–128 (EE) coordinates spermidine. D234 is a spermidine binding site. G276 is an NAD(+) binding site. Residue H281 participates in spermidine binding. 301–302 (SA) contacts NAD(+). Spermidine-binding positions include 307–309 (GSD) and 316–322 (EAVSWGK). The active-site Nucleophile is K322. Residue 335–336 (EV) coordinates NAD(+).

It belongs to the deoxyhypusine synthase family. NAD(+) is required as a cofactor.

The enzyme catalyses [eIF5A protein]-L-lysine + spermidine = [eIF5A protein]-deoxyhypusine + propane-1,3-diamine. Its pathway is protein modification; eIF5A hypusination. Functionally, catalyzes the NAD-dependent oxidative cleavage of spermidine and the subsequent transfer of the butylamine moiety of spermidine to the epsilon-amino group of a specific lysine residue of the eIF-5A precursor protein to form the intermediate deoxyhypusine residue. The protein is Probable deoxyhypusine synthase of Schizosaccharomyces pombe (strain 972 / ATCC 24843) (Fission yeast).